Consider the following 306-residue polypeptide: Mycothiol acetyltransferase (306 aa).

2 consecutive N-acetyltransferase domains span residues 5 to 162 (VWAE…TFVP) and 155 to 306 (VRLR…AQGS). Acetyl-CoA contacts are provided by residues 82–84 (LIV) and 90–95 (RRGHGT). 1D-myo-inositol 2-(L-cysteinylamino)-2-deoxy-alpha-D-glucopyranoside is bound by residues Glu-182, Lys-222, and Glu-238. Acetyl-CoA-binding positions include 242 to 244 (VGV) and 249 to 255 (QGGGLGK). Residue Tyr-276 coordinates 1D-myo-inositol 2-(L-cysteinylamino)-2-deoxy-alpha-D-glucopyranoside.

This sequence belongs to the acetyltransferase family. MshD subfamily. As to quaternary structure, monomer.

The catalysed reaction is 1D-myo-inositol 2-(L-cysteinylamino)-2-deoxy-alpha-D-glucopyranoside + acetyl-CoA = mycothiol + CoA + H(+). In terms of biological role, catalyzes the transfer of acetyl from acetyl-CoA to desacetylmycothiol (Cys-GlcN-Ins) to form mycothiol. In Saccharomonospora viridis (strain ATCC 15386 / DSM 43017 / JCM 3036 / CCUG 5913 / NBRC 12207 / NCIMB 9602 / P101) (Thermoactinomyces viridis), this protein is Mycothiol acetyltransferase.